A 342-amino-acid polypeptide reads, in one-letter code: Renalase (342 aa).

Residues 1-17 (MSRVLVVGAGLTGSLCA) form the signal peptide. Residues Thr12, Arg42, and 61 to 62 (QY) contribute to the FAD site.

Belongs to the renalase family. FAD serves as cofactor. As to expression, expressed predominantly in kidney and testis with lower levels in liver, heart and embryo and weak expression in brain and skeletal muscle.

It is found in the secreted. The enzyme catalyses 1,2-dihydro-beta-NAD + O2 + H(+) = H2O2 + NAD(+). It carries out the reaction 1,2-dihydro-beta-NADP + O2 + H(+) = H2O2 + NADP(+). The catalysed reaction is 1,6-dihydro-beta-NADP + O2 + H(+) = H2O2 + NADP(+). It catalyses the reaction 1,6-dihydro-beta-NAD + O2 + H(+) = H2O2 + NAD(+). Functionally, catalyzes the oxidation of the less abundant 1,2-dihydro-beta-NAD(P) and 1,6-dihydro-beta-NAD(P) to form beta-NAD(P)(+). The enzyme hormone is secreted by the kidney, and circulates in blood and modulates cardiac function and systemic blood pressure. Lowers blood pressure in vivo by decreasing cardiac contractility and heart rate and preventing a compensatory increase in peripheral vascular tone, suggesting a causal link to the increased plasma catecholamine and heightened cardiovascular risk. High concentrations of catecholamines activate plasma renalase and promotes its secretion and synthesis. This is Renalase from Mus musculus (Mouse).